The chain runs to 34 residues: Papillosin (34 aa).

Functionally, has strong antibacterial activity against the Gram-positive bacteria M.luteus, S.aureus, B.megaterium, A.viridans and E.faecalis, and against the Gram-negative bacteria K.pneumoniae, E.coli DH5alpha, S.typhimurium, P.aeruginosa and E.aerogenes. Lacks hemolytic activity against sheep erythrocytes. The protein is Papillosin of Halocynthia papillosa (Red sea-squirt).